The sequence spans 218 residues: Glutathione S-transferase Mu 7 (218 aa).

Residues 1 to 88 (MPMTLGYWDI…YLGRKHNLCG (88 aa)) form the GST N-terminal domain. Residues 7-8 (YW), 46-50 (WLNEK), 59-60 (NL), and 72-73 (QS) each bind glutathione. The GST C-terminal domain maps to 90–208 (TEEERIRVDI…KTSRFLPRPM (119 aa)). Tyrosine 116 is a binding site for substrate.

This sequence belongs to the GST superfamily. Mu family. Homodimer.

The protein resides in the cytoplasm. It catalyses the reaction RX + glutathione = an S-substituted glutathione + a halide anion + H(+). Functionally, conjugation of reduced glutathione to a wide number of exogenous and endogenous hydrophobic electrophiles. The sequence is that of Glutathione S-transferase Mu 7 (Gstm7) from Mus musculus (Mouse).